A 612-amino-acid chain; its full sequence is Dihydroxy-acid dehydratase (612 aa).

Aspartate 81 contacts Mg(2+). Residue cysteine 122 coordinates [2Fe-2S] cluster. Residues aspartate 123 and lysine 124 each coordinate Mg(2+). Lysine 124 is modified (N6-carboxylysine). A [2Fe-2S] cluster-binding site is contributed by cysteine 195. Glutamate 491 contacts Mg(2+). Serine 517 serves as the catalytic Proton acceptor.

It belongs to the IlvD/Edd family. In terms of assembly, homodimer. It depends on [2Fe-2S] cluster as a cofactor. Mg(2+) is required as a cofactor.

It carries out the reaction (2R)-2,3-dihydroxy-3-methylbutanoate = 3-methyl-2-oxobutanoate + H2O. The enzyme catalyses (2R,3R)-2,3-dihydroxy-3-methylpentanoate = (S)-3-methyl-2-oxopentanoate + H2O. Its pathway is amino-acid biosynthesis; L-isoleucine biosynthesis; L-isoleucine from 2-oxobutanoate: step 3/4. The protein operates within amino-acid biosynthesis; L-valine biosynthesis; L-valine from pyruvate: step 3/4. Its function is as follows. Functions in the biosynthesis of branched-chain amino acids. Catalyzes the dehydration of (2R,3R)-2,3-dihydroxy-3-methylpentanoate (2,3-dihydroxy-3-methylvalerate) into 2-oxo-3-methylpentanoate (2-oxo-3-methylvalerate) and of (2R)-2,3-dihydroxy-3-methylbutanoate (2,3-dihydroxyisovalerate) into 2-oxo-3-methylbutanoate (2-oxoisovalerate), the penultimate precursor to L-isoleucine and L-valine, respectively. This Bartonella tribocorum (strain CIP 105476 / IBS 506) protein is Dihydroxy-acid dehydratase.